A 301-amino-acid polypeptide reads, in one-letter code: Thyroxine 5-deiodinase (301 aa).

Topologically, residues 1-41 are cytoplasmic; sequence MSRQAAPRWVVGEGRGTLGGAATMLRSLLLHSLRLCSQTAS. A helical; Signal-anchor for type II membrane protein transmembrane segment spans residues 42-64; the sequence is CLVLFPRFLGTAFMLWLLDFLCI. Residues 65-301 are Extracellular-facing; sequence RKHLLGRRRR…QLHGPQPRRV (237 aa). The active site involves Sec167. Sec167 is a non-standard amino acid (selenocysteine).

This sequence belongs to the iodothyronine deiodinase family. As to quaternary structure, monomer. Homodimer. May undergo minor heretodimerization with DIO1 and DIO2. Highly expressed in mammary gland. Detected at lower levels in kidney, and at very low levels in the other tissues.

The protein localises to the cell membrane. It localises to the endosome membrane. It catalyses the reaction 3,3',5'-triiodo-L-thyronine + iodide + A + H(+) = L-thyroxine + AH2. The catalysed reaction is 3,3'-diiodo-L-thyronine + iodide + A + H(+) = 3,3',5-triiodo-L-thyronine + AH2. The enzyme catalyses 3-iodo-L-thyronine + iodide + A + H(+) = 3,5-diiodo-L-thyronine + AH2. It carries out the reaction L-thyronine + iodide + A + H(+) = 3-iodo-L-thyronine + AH2. It catalyses the reaction 3',5'-diiodo-L-thyronine + iodide + A + H(+) = 3,3',5'-triiodo-L-thyronine + AH2. The catalysed reaction is 3'-iodo-L-thyronine + iodide + A + H(+) = 3,3'-diiodo-L-thyronine + AH2. The enzyme catalyses 3,3',5'-triiodothyronamine + iodide + A + H(+) = 3,3',5,5'-tetraiodothyronamine + AH2. It carries out the reaction 3',5'-diiodothyronamine + iodide + A + H(+) = 3,3',5'-triiodothyronamine + AH2. It catalyses the reaction 3,3'-diiodothyronamine + iodide + A + H(+) = 3,3',5-triiodothyronamine + AH2. The catalysed reaction is 3-iodothyronamine + iodide + A + H(+) = 3,5-diiodothyronamine + AH2. The enzyme catalyses 3'-iodothyronamine + iodide + A + H(+) = 3,3'-diiodothyronamine + AH2. It carries out the reaction thyronamine + iodide + A + H(+) = 3-iodothyronamine + AH2. Plays a crucial role in the metabolism of thyroid hormones (TH) and has specific roles in TH activation and inactivation by deiodination. Catalyzes the deiodination of L-thyroxine (T4) to 3,3',5'-triiodothyronine (rT3), 3,5,3'-triiodothyronine (T3) to 3,3'-diiodothyronine (3,3'-T2), 3,5-diiodothyronine (3,5-T2) to 3-monoiodothyronine (3-T1), rT3 to 3',5'-diiodothyronine (3',5'-T2) and 3,3'-T2 to 3'-monoiodothyronine (3'-T1) via inner-ring deiodination (IRD). Catalyzes the deiodination of 3-T1 to L-thyronine (T0) via outer-ring deiodination (ORD). Catalyzes the tyrosyl ring deiodinations of 3,3',5,5'-tetraiodothyronamine, 3,3',5'-triiodothyronamine, 3,5,3'-triiodothyronamine, 3,5-diiodothyronamine, 3,3'-diiodothyronamine and 3-iodothyronamine. The chain is Thyroxine 5-deiodinase (DIO3) from Bos taurus (Bovine).